The following is a 502-amino-acid chain: Probable glycine dehydrogenase (decarboxylating) subunit 2 (502 aa).

Lys-273 carries the post-translational modification N6-(pyridoxal phosphate)lysine.

It belongs to the GcvP family. C-terminal subunit subfamily. The glycine cleavage system is composed of four proteins: P, T, L and H. In this organism, the P 'protein' is a heterodimer of two subunits. Pyridoxal 5'-phosphate serves as cofactor.

The catalysed reaction is N(6)-[(R)-lipoyl]-L-lysyl-[glycine-cleavage complex H protein] + glycine + H(+) = N(6)-[(R)-S(8)-aminomethyldihydrolipoyl]-L-lysyl-[glycine-cleavage complex H protein] + CO2. Functionally, the glycine cleavage system catalyzes the degradation of glycine. The P protein binds the alpha-amino group of glycine through its pyridoxal phosphate cofactor; CO(2) is released and the remaining methylamine moiety is then transferred to the lipoamide cofactor of the H protein. The chain is Probable glycine dehydrogenase (decarboxylating) subunit 2 from Pyrococcus furiosus (strain ATCC 43587 / DSM 3638 / JCM 8422 / Vc1).